Consider the following 209-residue polypeptide: Large ribosomal subunit protein uL3 (209 aa).

An N5-methylglutamine modification is found at Gln150.

It belongs to the universal ribosomal protein uL3 family. In terms of assembly, part of the 50S ribosomal subunit. Forms a cluster with proteins L14 and L19. Post-translationally, methylated by PrmB.

Its function is as follows. One of the primary rRNA binding proteins, it binds directly near the 3'-end of the 23S rRNA, where it nucleates assembly of the 50S subunit. This is Large ribosomal subunit protein uL3 from Vibrio parahaemolyticus serotype O3:K6 (strain RIMD 2210633).